Here is a 504-residue protein sequence, read N- to C-terminus: Glycerol kinase (504 aa).

Residue threonine 12 participates in ADP binding. Residues threonine 12, threonine 13, and serine 14 each contribute to the ATP site. Threonine 12 lines the sn-glycerol 3-phosphate pocket. Position 16 (arginine 16) interacts with ADP. Arginine 82, glutamate 83, tyrosine 134, and aspartate 246 together coordinate sn-glycerol 3-phosphate. Glycerol is bound by residues arginine 82, glutamate 83, tyrosine 134, aspartate 246, and glutamine 247. ADP-binding residues include threonine 268 and glycine 312. Residues threonine 268, glycine 312, glutamine 316, and glycine 413 each coordinate ATP. ADP-binding residues include glycine 413 and asparagine 417.

Belongs to the FGGY kinase family.

It carries out the reaction glycerol + ATP = sn-glycerol 3-phosphate + ADP + H(+). Its pathway is polyol metabolism; glycerol degradation via glycerol kinase pathway; sn-glycerol 3-phosphate from glycerol: step 1/1. Its activity is regulated as follows. Inhibited by fructose 1,6-bisphosphate (FBP). Key enzyme in the regulation of glycerol uptake and metabolism. Catalyzes the phosphorylation of glycerol to yield sn-glycerol 3-phosphate. The protein is Glycerol kinase of Pseudarthrobacter chlorophenolicus (strain ATCC 700700 / DSM 12829 / CIP 107037 / JCM 12360 / KCTC 9906 / NCIMB 13794 / A6) (Arthrobacter chlorophenolicus).